We begin with the raw amino-acid sequence, 91 residues long: Acylphosphatase (91 aa).

An Acylphosphatase-like domain is found at 6–91 (CMRCYISGRV…WKDYISFDVL (86 aa)). Catalysis depends on residues Arg-21 and Asn-39.

It belongs to the acylphosphatase family.

It carries out the reaction an acyl phosphate + H2O = a carboxylate + phosphate + H(+). The sequence is that of Acylphosphatase (acyP) from Legionella pneumophila (strain Paris).